The chain runs to 385 residues: MVEQTQHPTILQKVSGQLLSSSVSQDIRGYASASKRPATYQKHAAYGNYSNAAFQYPLVAASQIATTTSPVFVQAPGEKGFTNFAIDFMMGGVSAAVSKTAAAPIERVKLLIQNQDEMLKAGRLTEPYKGIRDCFGRTIRDEGIGSLWRGNTANVIRYFPTQALNFAFKDYFKRLFNFKKDKDGYWKWFAGNLASGGAAGASSLLFVYSLDYARTRLANDSKSAKKGGGERQFNGLVDVYKKTLKSDGIAGLYRGFNISCAGIIVYRGLYFGLYDSVKPVLLTGDLQDSFFASFALGWLITNGAGLASYPIDTVRRRMMMTSGEAVKYKSSFDAFSQIVKKEGAKSLFKGAGANILRAVAGAGVLAGYDKLQLIVFGKKYGSGGA.

Residues 1 to 74 (MVEQTQHPTI…ATTTSPVFVQ (74 aa)) constitute a mitochondrion transit peptide. Solcar repeat units lie at residues 82–175 (TNFA…FKRL), 187–280 (KWFA…VKPV), and 288–374 (DSFF…LQLI). 5 helical membrane-spanning segments follow: residues 84-111 (FAID…VKLL), 152-176 (TANV…KRLF), 185-205 (YWKW…SSLL), 256-277 (FNIS…YDSV), and 291-311 (FASF…SYPI). ADP is bound by residues Arg157 and Lys169. Arg315 provides a ligand contact to ADP. The segment at 315–320 (RRRMMM) is important for transport activity. Residues 315 to 320 (RRRMMM) carry the Nucleotide carrier signature motif motif. Residues 351 to 371 (AGANILRAVAGAGVLAGYDKL) traverse the membrane as a helical segment.

This sequence belongs to the mitochondrial carrier (TC 2.A.29) family. As to quaternary structure, monomer.

It localises to the mitochondrion inner membrane. The catalysed reaction is ADP(in) + ATP(out) = ADP(out) + ATP(in). The matrix-open state (m-state) is inhibited by the membrane-permeable bongkrekic acid (BKA). The cytoplasmic-open state (c-state) is inhibited by the membrane-impermeable toxic inhibitor carboxyatractyloside (CATR). In terms of biological role, ADP:ATP antiporter that mediates import of ADP into the mitochondrial matrix for ATP synthesis, and export of ATP out to fuel the cell. Cycles between the cytoplasmic-open state (c-state) and the matrix-open state (m-state): operates by the alternating access mechanism with a single substrate-binding site intermittently exposed to either the cytosolic (c-state) or matrix (m-state) side of the inner mitochondrial membrane. The sequence is that of ADP,ATP carrier protein 2, mitochondrial (AAC2) from Arabidopsis thaliana (Mouse-ear cress).